The following is a 429-amino-acid chain: Glucose-6-phosphate exchanger SLC37A4 (429 aa).

The next 10 helical transmembrane spans lie at 84–104 (LLLV…PVFA), 105–125 (ALWF…GKVL), 139–159 (AILS…ATIL), 167–187 (STLA…LLLI), 219–239 (ELLL…VFGV), 260–280 (LVGS…SIAA), 302–322 (GLLL…RVTV), 329–349 (LWIL…IALF), 368–388 (IVGL…STIA), and 394–414 (STAF…FFLL).

Belongs to the major facilitator superfamily. Organophosphate:Pi antiporter (OPA) (TC 2.A.1.4) family. As to expression, mostly expressed in liver and kidney.

It is found in the endoplasmic reticulum membrane. The catalysed reaction is D-glucose 6-phosphate(in) + phosphate(out) = D-glucose 6-phosphate(out) + phosphate(in). Its activity is regulated as follows. Inhibited by vanadate and chlorogenic acid. Inorganic phosphate and glucose-6-phosphate antiporter of the endoplasmic reticulum. Transports cytoplasmic glucose-6-phosphate into the lumen of the endoplasmic reticulum and translocates inorganic phosphate into the opposite direction. Forms with glucose-6-phosphatase the complex responsible for glucose production through glycogenolysis and gluconeogenesis. Hence, it plays a central role in homeostatic regulation of blood glucose levels. This is Glucose-6-phosphate exchanger SLC37A4 from Homo sapiens (Human).